A 638-amino-acid chain; its full sequence is Epithelial sodium channel subunit delta (638 aa).

Positions 1 to 13 (MAEHRSMDGRMEA) are enriched in basic and acidic residues. A disordered region spans residues 1 to 47 (MAEHRSMDGRMEAATRGGSHLQAAAQTPPRPGPPSAPPPPPKEGHQE). Topologically, residues 1 to 86 (MAEHRSMDGR…CSRGNRLKTT (86 aa)) are cytoplasmic. The span at 28–41 (PPRPGPPSAPPPPP) shows a compositional bias: pro residues. The chain crosses the membrane as a helical span at residues 87–107 (SWGLLSLGALVALCWQLGLLF). The Extracellular portion of the chain corresponds to 108–530 (ERHWHRPVLM…VPQLLSAMGS (423 aa)). Residues Asn-166 and Asn-384 are each glycosylated (N-linked (GlcNAc...) asparagine). The chain crosses the membrane as a helical span at residues 531–551 (LCSLWFGASVLSLLELLELLL). The Cytoplasmic segment spans residues 552-638 (DASALTLVLG…GPQPLETLDT (87 aa)). Positions 574–613 (RASPASGASSIKPEASQMPTPAGGTSDDPEPSGPHLPRVM) are disordered.

This sequence belongs to the amiloride-sensitive sodium channel (TC 1.A.6) family. SCNN1D subfamily. As to quaternary structure, can form an alternative heterotrimeric epithelial sodium channel (ENaC), composed of a delta (SCNN1D), beta (SCNN1B), and gamma (SCNN1G) subunit, where the delta (SCNN1D) subunit replaces the alpha (SCNN1A) subunit.

It localises to the apical cell membrane. The enzyme catalyses Na(+)(in) = Na(+)(out). Its activity is regulated as follows. Originally identified and characterized by its inhibition by the diuretic drug amiloride. Potential alternative pore-forming subunit of the epithelial sodium channel (ENaC), capable of replacing the alpha/SCNN1A subunit, creating a more active channel with distinct properties. ENaC functions in epithelial tissues, where it facilitates the electrodiffusion of sodium ions from the extracellular fluid through the apical membrane of cells, with water following osmotically, regulating sodium balance and fluid homeostasis. This subunit could also function independently as a sodium channel or assemble into other tissue-specific heterotrimeric sodium channels. The protein is Epithelial sodium channel subunit delta of Pan troglodytes (Chimpanzee).